The following is an 818-amino-acid chain: G-type lectin S-receptor-like serine/threonine-protein kinase At1g67520 (818 aa).

Residues 1–22 (MCSNGIFVSLLTLSLLLGKSCS) form the signal peptide. The Extracellular segment spans residues 23-387 (ETDTLHQGQF…NENKKVAAWH (365 aa)). The 126-residue stretch at 24 to 149 (TDTLHQGQFL…DADGSMKRVL (126 aa)) folds into the Bulb-type lectin domain. Residues N123, N199, and N337 are each glycosylated (N-linked (GlcNAc...) asparagine). The PAN domain occupies 290 to 379 (CLAAGYVVRD…PRTIYIRGNE (90 aa)). 2 disulfide bridges follow: C330–C353 and C334–C340. The helical transmembrane segment at 388–408 (IVVATLFLMTPIIWFIIYLVL) threads the bilayer. At 409–818 (RKFNVKGRNC…SITITVLEAR (410 aa)) the chain is on the cytoplasmic side. Positions 496 to 785 (FSDENKLGEG…ALSLPKEPAF (290 aa)) constitute a Protein kinase domain. ATP contacts are provided by residues 502-510 (LGEGGFGPV) and K524. S530 is modified (phosphoserine). The segment at 585-602 (LRKNVLDWTLRFRIMEGI) is caM-binding. Catalysis depends on D621, which acts as the Proton acceptor. Residues S625 and S638 each carry the phosphoserine modification. The residue at position 655 (T655) is a Phosphothreonine. Phosphoserine is present on residues S699 and S807. Position 813 is a phosphothreonine (T813).

This sequence belongs to the protein kinase superfamily. Ser/Thr protein kinase family.

The protein localises to the cell membrane. It carries out the reaction L-seryl-[protein] + ATP = O-phospho-L-seryl-[protein] + ADP + H(+). It catalyses the reaction L-threonyl-[protein] + ATP = O-phospho-L-threonyl-[protein] + ADP + H(+). The chain is G-type lectin S-receptor-like serine/threonine-protein kinase At1g67520 from Arabidopsis thaliana (Mouse-ear cress).